Reading from the N-terminus, the 156-residue chain is N-glycosidase Npun_R5314 (156 aa).

Belongs to the YbiA family.

It carries out the reaction 2,5-diamino-6-hydroxy-4-(5-phosphoribosylamino)-pyrimidine + H2O = 2,5,6-triamino-4-hydroxypyrimidine + D-ribose 5-phosphate. The catalysed reaction is 5-amino-6-(5-phospho-D-ribosylamino)uracil + H2O = 5,6-diaminouracil + D-ribose 5-phosphate. Catalyzes the hydrolysis of the N-glycosidic bond in the first two intermediates of riboflavin biosynthesis, which are highly reactive metabolites, yielding relatively innocuous products. Thus, can divert a surplus of harmful intermediates into relatively harmless products and pre-empt the damage these intermediates would otherwise do. May act on other substrates in vivo. Has no activity against GTP, nucleoside monophosphates or ADP-ribose. This Nostoc punctiforme (strain ATCC 29133 / PCC 73102) protein is N-glycosidase Npun_R5314.